Consider the following 328-residue polypeptide: Tetraacyldisaccharide 4'-kinase (328 aa).

Residue 58–65 (TMGGAGKT) coordinates ATP.

The protein belongs to the LpxK family.

It catalyses the reaction a lipid A disaccharide + ATP = a lipid IVA + ADP + H(+). It participates in glycolipid biosynthesis; lipid IV(A) biosynthesis; lipid IV(A) from (3R)-3-hydroxytetradecanoyl-[acyl-carrier-protein] and UDP-N-acetyl-alpha-D-glucosamine: step 6/6. In terms of biological role, transfers the gamma-phosphate of ATP to the 4'-position of a tetraacyldisaccharide 1-phosphate intermediate (termed DS-1-P) to form tetraacyldisaccharide 1,4'-bis-phosphate (lipid IVA). This is Tetraacyldisaccharide 4'-kinase from Phenylobacterium zucineum (strain HLK1).